The following is a 333-amino-acid chain: Gap junction alpha-4 protein (333 aa).

Topologically, residues 1-20 (MGDWGFLEKLLDQVQEHSTV) are cytoplasmic. The chain crosses the membrane as a helical span at residues 21–40 (VGKIWLTVLFIFRILILGLA). Over 41 to 76 (GESVWGDEQSDFECNTAQPGCTNVCYDQAFPISHIR) the chain is Extracellular. A helical membrane pass occupies residues 77–99 (YWVLQFLFVSTPTLIYLGHVIYL). Topologically, residues 100–148 (SRREERLRQKEGELRALPSKDLHVERALAAIEHQMAKISVAEDGRLRIR) are cytoplasmic. A helical membrane pass occupies residues 149–171 (GALMGTYVVSVLCKSVLEAGFLY). Residues 172–208 (GQWRLYGWTMEPVFVCQRAPCPHIVDCYVSRPTEKTI) are Extracellular-facing. The helical transmembrane segment at 209 to 231 (FIIFMLVVGVISLVLNLLELVHL) threads the bilayer. Topologically, residues 232–333 (LCRCVSREIK…NSSASKKQYV (102 aa)) are cytoplasmic. The tract at residues 292 to 333 (ANLTTEERLTSSRPPPFVNTAPQGGRKSPSRPNSSASKKQYV) is disordered. The span at 321–333 (SRPNSSASKKQYV) shows a compositional bias: polar residues.

This sequence belongs to the connexin family. Alpha-type (group II) subfamily. A connexon is composed of a hexamer of connexins. As to expression, highly expressed in lung.

Its subcellular location is the cell membrane. It is found in the cell junction. It localises to the gap junction. One gap junction consists of a cluster of closely packed pairs of transmembrane channels, the connexons, through which materials of low MW diffuse from one cell to a neighboring cell. The sequence is that of Gap junction alpha-4 protein (Gja4) from Mus musculus (Mouse).